Consider the following 577-residue polypeptide: 2-succinyl-5-enolpyruvyl-6-hydroxy-3-cyclohexene-1-carboxylate synthase (577 aa).

It belongs to the TPP enzyme family. MenD subfamily. As to quaternary structure, homodimer. Mg(2+) is required as a cofactor. The cofactor is Mn(2+). It depends on thiamine diphosphate as a cofactor.

It catalyses the reaction isochorismate + 2-oxoglutarate + H(+) = 5-enolpyruvoyl-6-hydroxy-2-succinyl-cyclohex-3-ene-1-carboxylate + CO2. It functions in the pathway quinol/quinone metabolism; 1,4-dihydroxy-2-naphthoate biosynthesis; 1,4-dihydroxy-2-naphthoate from chorismate: step 2/7. The protein operates within quinol/quinone metabolism; menaquinone biosynthesis. Its function is as follows. Catalyzes the thiamine diphosphate-dependent decarboxylation of 2-oxoglutarate and the subsequent addition of the resulting succinic semialdehyde-thiamine pyrophosphate anion to isochorismate to yield 2-succinyl-5-enolpyruvyl-6-hydroxy-3-cyclohexene-1-carboxylate (SEPHCHC). In Christiangramia forsetii (strain DSM 17595 / CGMCC 1.15422 / KT0803) (Gramella forsetii), this protein is 2-succinyl-5-enolpyruvyl-6-hydroxy-3-cyclohexene-1-carboxylate synthase.